The primary structure comprises 197 residues: MSVSNEYKLVVMGGGGVGKSALTIQFIQNHFIEEYDPTIEDSYRRQCQVDEDTCLLDILDTAGQDDYSAMRDQYMRTGQGFLCVYDVTSRTSFEEINVVREQIIRVKDNDKVPIVLVGNKCDLENLREVTEGEGSELAKSFSVPFLETSAKKRLNVDECFFEVVREIKKSLKEPGRSKKDKKGGILKKFKGGDCLIL.

13-20 provides a ligand contact to GTP; the sequence is GGGGVGKS. The Effector region motif lies at 35-43; the sequence is YDPTIEDSY. GTP contacts are provided by residues 60–64 and 119–122; these read DTAGQ and NKCD. Position 194 is a cysteine methyl ester (Cys194). The S-geranylgeranyl cysteine moiety is linked to residue Cys194. Positions 195–197 are cleaved as a propeptide — removed in mature form; that stretch reads LIL.

This sequence belongs to the small GTPase superfamily. Ras family.

It localises to the cell membrane. The catalysed reaction is GTP + H2O = GDP + phosphate + H(+). With respect to regulation, alternates between an inactive form bound to GDP and an active form bound to GTP. Activated by a guanine nucleotide-exchange factor (GEF) and inactivated by a GTPase-activating protein (GAP). Its function is as follows. Ras proteins bind GDP/GTP and possess intrinsic GTPase activity. This is Ras-like protein rasB (rasB) from Dictyostelium discoideum (Social amoeba).